The sequence spans 148 residues: Small ribosomal subunit protein eS19 (148 aa).

The segment covering 79–90 has biased composition (basic residues); it reads HGSTKNRGSRPA. Disordered regions lie at residues 79–98 and 116–148; these read HGSTKNRGSRPAHHVDASGA and DEEKGGRRITQSGQRDLDRIAKTTVDEEEEDDE. The span at 130–140 shows a compositional bias: basic and acidic residues; it reads RDLDRIAKTTV.

Belongs to the eukaryotic ribosomal protein eS19 family.

The chain is Small ribosomal subunit protein eS19 (rps19) from Emericella nidulans (strain FGSC A4 / ATCC 38163 / CBS 112.46 / NRRL 194 / M139) (Aspergillus nidulans).